We begin with the raw amino-acid sequence, 260 residues long: Protein SVS1 (260 aa).

Positions 1 to 19 (MIFKILCSLLLVTSNFASA) are cleaved as a signal peptide. 3 N-linked (GlcNAc...) asparagine glycosylation sites follow: asparagine 23, asparagine 249, and asparagine 256.

In terms of biological role, required for vanadate resistance. The sequence is that of Protein SVS1 (SVS1) from Saccharomyces cerevisiae (strain ATCC 204508 / S288c) (Baker's yeast).